Here is a 180-residue protein sequence, read N- to C-terminus: MYQKDLYDLQIDLVFKCNDFSNLSNHFINKSDNIIFESGFWEEVLLCWIKIILDEKDTSFPNFILYKKSFSLSLQIINDNEISSINQKWMNKSGSTDVLSFPIISDEDTTKDLNFIELGDLFISLETAFKQSLEFNHSIKKEMLWLASHGLLHLLGWEHNDDYELDNMLNFQEYLISKLD.

The Zn(2+) site is built by H149, H153, and H159.

This sequence belongs to the endoribonuclease YbeY family. It depends on Zn(2+) as a cofactor.

The protein resides in the cytoplasm. In terms of biological role, single strand-specific metallo-endoribonuclease involved in late-stage 70S ribosome quality control and in maturation of the 3' terminus of the 16S rRNA. The chain is Endoribonuclease YbeY from Prochlorococcus marinus subsp. pastoris (strain CCMP1986 / NIES-2087 / MED4).